A 594-amino-acid polypeptide reads, in one-letter code: DNA polymerase epsilon subunit B (594 aa).

It belongs to the DNA polymerase epsilon subunit B family. As to quaternary structure, heterotetramer. Consists of four subunits: pol2, dpb2, dpb3 and dpb4. Interacts with dpb3.

It is found in the nucleus. Its function is as follows. As accessory component of the DNA polymerase epsilon (DNA polymerase II) participates in chromosomal DNA replication. The chain is DNA polymerase epsilon subunit B (dpb2) from Schizosaccharomyces pombe (strain 972 / ATCC 24843) (Fission yeast).